Consider the following 197-residue polypeptide: Probable nicotinate-nucleotide adenylyltransferase (197 aa).

Belongs to the NadD family.

The catalysed reaction is nicotinate beta-D-ribonucleotide + ATP + H(+) = deamido-NAD(+) + diphosphate. It participates in cofactor biosynthesis; NAD(+) biosynthesis; deamido-NAD(+) from nicotinate D-ribonucleotide: step 1/1. Its function is as follows. Catalyzes the reversible adenylation of nicotinate mononucleotide (NaMN) to nicotinic acid adenine dinucleotide (NaAD). The chain is Probable nicotinate-nucleotide adenylyltransferase from Pseudothermotoga lettingae (strain ATCC BAA-301 / DSM 14385 / NBRC 107922 / TMO) (Thermotoga lettingae).